Reading from the N-terminus, the 292-residue chain is 4-amino-L-phenylalanine/4-methylamino-L-phenylalanine methyltransferase (292 aa).

128–132 (CAGPG) contributes to the S-adenosyl-L-methionine binding site.

Belongs to the protein N5-glutamine methyltransferase family.

The catalysed reaction is 4-amino-L-phenylalanine + S-adenosyl-L-methionine = 4-methylamino-L-phenylalanine + S-adenosyl-L-homocysteine + H(+). It catalyses the reaction 4-methylamino-L-phenylalanine + S-adenosyl-L-methionine = 4-dimethylamino-L-phenylalanine + S-adenosyl-L-homocysteine + H(+). It functions in the pathway antibiotic biosynthesis. Involved in pristinamycin I biosynthesis. Catalyzes the SAM-dependent methylation of 4-amino-L-phenylalanine (PAPA) to 4-methylamino-L-phenylalanine (MMPAPA), and of MMPAPA to 4-dimethylamino-L-phenylalanine (DMPAPA). This Streptomyces pristinaespiralis protein is 4-amino-L-phenylalanine/4-methylamino-L-phenylalanine methyltransferase.